The chain runs to 261 residues: Indole-3-glycerol phosphate synthase (261 aa).

It belongs to the TrpC family.

The catalysed reaction is 1-(2-carboxyphenylamino)-1-deoxy-D-ribulose 5-phosphate + H(+) = (1S,2R)-1-C-(indol-3-yl)glycerol 3-phosphate + CO2 + H2O. It functions in the pathway amino-acid biosynthesis; L-tryptophan biosynthesis; L-tryptophan from chorismate: step 4/5. The sequence is that of Indole-3-glycerol phosphate synthase from Campylobacter curvus (strain 525.92).